A 351-amino-acid polypeptide reads, in one-letter code: Regulator of V-ATPase in vacuolar membrane protein 2 (351 aa).

As to quaternary structure, component of the RAVE complex composed of RAV1, RAV2 and CBF3D/SKP1. Within the complex, it interacts directly with RAV1 and CBF3D. Interacts with the V-ATPase V1 subunits VMA1, VMA2 and VMA8.

The protein localises to the cytoplasm. Its subcellular location is the early endosome membrane. Component of the RAVE complex, which is required for stable assembly of the vacuolar ATPase complex V-ATPase under many conditions. May be required for transport between the early endosome and the late endosome/prevacuolar compartment (PVC). The chain is Regulator of V-ATPase in vacuolar membrane protein 2 (RAV2) from Saccharomyces cerevisiae (strain ATCC 204508 / S288c) (Baker's yeast).